A 680-amino-acid chain; its full sequence is Leucine-rich repeat and calponin homology domain-containing protein 4 (680 aa).

Positions 1–22 (MAAAVAGPLAAGGEEAAASVSL) are enriched in low complexity. Residues 1–35 (MAAAVAGPLAAGGEEAAASVSLPGSPGLPGSRSAE) are disordered. LRR repeat units lie at residues 41 to 64 (AVATGTLNLSNRRLKHFPRGAARS), 67 to 90 (LSDITQADLSRNRFPEVPEAACQL), 92 to 113 (SLEGLSLYHNCLKCLNPALGNL), 114 to 136 (TALTYLNLSRNQLSSLPPYICQL), 138 to 158 (LRVLIISNNKLGALPPDISTL), 159 to 181 (GSLRQLDVSSNELQSLPVELCSL), 182 to 204 (RSLRDLNVRRNQLSTLPDELGDL), 206 to 226 (LVRLDFSCNRISRIPVSFCRL), and 227 to 250 (RHLQVVLLDSNPLQSPPAQICLKG). S279, S281, S304, S307, S309, and S313 each carry phosphoserine. The interval 329 to 528 (SELARDPRGP…PSSPESVLRP (200 aa)) is disordered. Residues 330–345 (ELARDPRGPRQPREDG) are compositionally biased toward basic and acidic residues. Residues 346–355 (AGDGDLEQID) show a composition bias toward acidic residues. Basic and acidic residues-rich tracts occupy residues 357–371 (IDSHVPGEDEDRSAA) and 385–418 (DVEKPSSSRREEPAGEERRRPDTLQLWQERERKQ). S432 is subject to Phosphoserine. Composition is skewed to low complexity over residues 440-453 (AAGAGASAPSTQAT) and 510-528 (RSSSQSGSSPSSPESVLRP). Phosphoserine is present on residues S511, S513, S517, S521, and S586. The Calponin-homology (CH) domain maps to 531–644 (FPQEKELISQ…VLEAVILVGG (114 aa)). A helical membrane pass occupies residues 655–675 (GLGGFLLFYVVFMLLLYVVYT).

In terms of tissue distribution, widely expressed across tissues, with the most abundant expression in spleen, testes, thymus, intestine, and blood. Expressed in macrophages.

The protein localises to the cell membrane. Functionally, accessory protein that regulates signaling by multiple TLRs, acting as a broad-spanning regulator of the innate immune response. In macrophages, binds LPS and promotes proper docking of LPS in lipid raft membrane. May be required for lipid raft maintenance. In Mus musculus (Mouse), this protein is Leucine-rich repeat and calponin homology domain-containing protein 4 (Lrch4).